The chain runs to 470 residues: MNPNQKILFASATAIVIGTIAVLIGIVNLGLNIGLHLKPSCNCSRSQPEATNASQTIINNYYNKTNITQISNTNIQVEERASREFNNLTKGLCTINSWHIYGKDNAVRIGEDSDVLVTREPYVSCDPDECRFYALSQGTTIRGKHSNGTIHDRSQYRALISWPLSSPPTVYNSRVECIGWSSTSCHDGRARMSICISGPNNNASAVIWYNRRPVTEINTWARNILRTQESECVCHNGVCPVVFTDGSATGPAETRIYYFKEGKILKWEPLTGTAKHIEECSCYGEQARVTCTCRDNWQGSNRPVIQIDPVAMTHTSQYICSPVLTDNPRPNDPTVGKCNDPYPGNNNNGVKGFSYLDGGNTWLGRTISTASRSGYEMLKVPNALTDDRSKPTQGQTIVLNTDWSGYSGSFMDYWAEGECYRACFYVELIRGRPKEDRVWWTSNSIVSMCSSTEFLGQWNWPDGAKIEYFL.

Over 1–6 the chain is Intravirion; it reads MNPNQK. The chain crosses the membrane as a helical span at residues 7–27; that stretch reads ILFASATAIVIGTIAVLIGIV. Residues 11–33 are involved in apical transport and lipid raft association; it reads SATAIVIGTIAVLIGIVNLGLNI. Residues 28 to 470 lie on the Virion surface side of the membrane; it reads NLGLNIGLHL…PDGAKIEYFL (443 aa). The tract at residues 36–89 is hypervariable stalk region; sequence HLKPSCNCSRSQPEATNASQTIINNYYNKTNITQISNTNIQVEERASREFNNLT. N42, N52, N63, N66, and N87 each carry an N-linked (GlcNAc...) asparagine; by host glycan. The segment at 92-470 is head of neuraminidase; sequence LCTINSWHIY…PDGAKIEYFL (379 aa). 8 disulfide bridges follow: C93–C419, C125–C130, C185–C232, C234–C239, C280–C293, C282–C291, C320–C338, and C423–C449. R119 is a binding site for substrate. N147 carries N-linked (GlcNAc...) asparagine; by host glycosylation. D152 serves as the catalytic Proton donor/acceptor. Substrate is bound at residue R153. The N-linked (GlcNAc...) asparagine; by host glycan is linked to N202. 278 to 279 provides a ligand contact to substrate; that stretch reads EE. R294 serves as a coordination point for substrate. 4 residues coordinate Ca(2+): D295, G299, D326, and N348. R372 serves as a coordination point for substrate. Y406 serves as the catalytic Nucleophile.

It belongs to the glycosyl hydrolase 34 family. In terms of assembly, homotetramer. Ca(2+) serves as cofactor. N-glycosylated.

Its subcellular location is the virion membrane. The protein localises to the host apical cell membrane. The catalysed reaction is Hydrolysis of alpha-(2-&gt;3)-, alpha-(2-&gt;6)-, alpha-(2-&gt;8)- glycosidic linkages of terminal sialic acid residues in oligosaccharides, glycoproteins, glycolipids, colominic acid and synthetic substrates.. Inhibited by the neuraminidase inhibitors zanamivir (Relenza) and oseltamivir (Tamiflu). These drugs interfere with the release of progeny virus from infected cells and are effective against all influenza strains. Resistance to neuraminidase inhibitors is quite rare. In terms of biological role, catalyzes the removal of terminal sialic acid residues from viral and cellular glycoconjugates. Cleaves off the terminal sialic acids on the glycosylated HA during virus budding to facilitate virus release. Additionally helps virus spread through the circulation by further removing sialic acids from the cell surface. These cleavages prevent self-aggregation and ensure the efficient spread of the progeny virus from cell to cell. Otherwise, infection would be limited to one round of replication. Described as a receptor-destroying enzyme because it cleaves a terminal sialic acid from the cellular receptors. May facilitate viral invasion of the upper airways by cleaving the sialic acid moieties on the mucin of the airway epithelial cells. Likely to plays a role in the budding process through its association with lipid rafts during intracellular transport. May additionally display a raft-association independent effect on budding. Plays a role in the determination of host range restriction on replication and virulence. Sialidase activity in late endosome/lysosome traffic seems to enhance virus replication. This Aves protein is Neuraminidase.